A 285-amino-acid chain; its full sequence is MTVPQLHYVPYDTPVEDVMRILEECGTLVIRNFLDQKTVQNVQNEVDDYVRNWNPGPKYNHDIKTVGSKTKQPSNLSLMSKTYRCEVLNHPWMHAICERMFGPTYGDYWFNGGSILHLEPGEHTQPIHQDHVFYHISKWRRPTDPDLTINFAMALTEFTVENGGTRVCPGSHLWENGHAPPAEEDMVPALMQPGDALILPGSMWHSAGANRSSEYRRGFAASFHPCHFTPIESHHHLPREMVEEMSPLVQKMLGFRTLNLHNNVKVWKAGEGNLEDATGLKSIAV.

Fe cation-binding residues include His-128, Asp-130, and His-205.

The protein belongs to the PhyH family. Homodimer. Requires Fe cation as cofactor.

It functions in the pathway secondary metabolite biosynthesis; terpenoid biosynthesis. Its function is as follows. Dioxygenase; part of the gene cluster that mediates the biosynthesis of anditomin, a fungal meroterpenoid. The first step of the pathway is the synthesis of 3,5-dimethylorsellinic acid (DMOA) by the polyketide synthase andM. DMOA is then converted to the phthalide compound 5,7-dihydroxy-4,6-dimethylphthalide (DHDMP) by the cytochrome P450 monooxygenase andK, which is further prenylated by the prenyltransferase andD to yield farnesyl-DHDMP. Further epoxidation by the FAD-dependent monooxygenase andE leads to epoxyfarnesyl-DHDMP. The next step involves the terpene cyclase andB that converts epoxyfarnesyl-DHDMP into preandiloid A through opening of the epoxide ring followed by the cyclization of the farnesyl moiety. Preandiloid A is in turn oxidized at the C-3 hydroxyl group to yield preandiloid B by the dehydrogenase andC. The dioxygenase andA is solely responsible for the dehydrogenation of preandiloid B leading to the enone preandiloid C, as well as for the intriguing structural rearrangement to generate the bicyclo[2.2.2]octane core, transforming preandiloid C into andiconin. FAD-binding monooxygenase andJ then produces andilesin D which is reduced by dehydrogenase andI to yield andilesin A. Action of acetyltransferase andG followed by a spontaneous acetate elimination leads then to andilesin B, which is in turn substrate of the short chain dehydrogenase andH to yield andilesin C. Finally, the dioxygenase andF catalyzes the transformation of andilesin C to anditomin. In Emericella variicolor (Aspergillus stellatus), this protein is Dioxygenase andF.